The chain runs to 37 residues: Large ribosomal subunit protein bL36c (37 aa).

Belongs to the bacterial ribosomal protein bL36 family.

It localises to the plastid. It is found in the chloroplast. This chain is Large ribosomal subunit protein bL36c, found in Lactuca sativa (Garden lettuce).